We begin with the raw amino-acid sequence, 207 residues long: Superoxide dismutase [Mn] (207 aa).

Positions 28, 76, 160, and 164 each coordinate Mn(2+).

This sequence belongs to the iron/manganese superoxide dismutase family. Mn(2+) serves as cofactor.

It carries out the reaction 2 superoxide + 2 H(+) = H2O2 + O2. Functionally, destroys superoxide anion radicals which are normally produced within the cells and which are toxic to biological systems. The chain is Superoxide dismutase [Mn] (sodA) from Mycobacterium avium.